Reading from the N-terminus, the 617-residue chain is Chaperone protein DnaK (617 aa).

Positions 579-617 (KAQQEAQQASGEAGSADARGPDETVVDADYEVVDDEKRK) are disordered. A compositionally biased stretch (low complexity) spans 580 to 594 (AQQEAQQASGEAGSA). Positions 602 to 617 (TVVDADYEVVDDEKRK) are enriched in acidic residues.

Belongs to the heat shock protein 70 family.

Acts as a chaperone. The chain is Chaperone protein DnaK from Methanosarcina acetivorans (strain ATCC 35395 / DSM 2834 / JCM 12185 / C2A).